The following is a 346-amino-acid chain: MKIELLNTPADALEIRYEEQIRPLKMDDFTGQQRLTDNLRVFISAAKIRGDALDHVLLSGPPGLGKTTLANIIASEMGGNIKVTSGPMLDKAGNLAGLLTSLRKGDVLFIDEIHRLPAAVEEYLYSAMEDFRIDIMLDSGPSARAVQLRIEPFTLVGATTRSGLLTSPLRARFGISSRFDYYPPELLERIILRASGILGIGVTTEAAGEIAGRSRGTPRIANRLLRRARDFAQVADSFVINHDIAMTTLASLEIDEEGLDDMDKKIMDTIVNKFNGGPVGVASLAVSVGEEQDTIEEVYEPYLIQAGYLARTPRGRVATRLALKRFSSGSGINSSEGPLFDAAPAR.

The large ATPase domain (RuvB-L) stretch occupies residues methionine 1–tyrosine 182. ATP-binding positions include isoleucine 21, arginine 22, glycine 63, lysine 66, threonine 67, threonine 68, glutamate 129–phenylalanine 131, arginine 172, tyrosine 182, and arginine 219. Threonine 67 lines the Mg(2+) pocket. A small ATPAse domain (RuvB-S) region spans residues proline 183–glutamate 253. The head domain (RuvB-H) stretch occupies residues glutamate 256–arginine 346. DNA-binding residues include arginine 311 and arginine 316.

This sequence belongs to the RuvB family. Homohexamer. Forms an RuvA(8)-RuvB(12)-Holliday junction (HJ) complex. HJ DNA is sandwiched between 2 RuvA tetramers; dsDNA enters through RuvA and exits via RuvB. An RuvB hexamer assembles on each DNA strand where it exits the tetramer. Each RuvB hexamer is contacted by two RuvA subunits (via domain III) on 2 adjacent RuvB subunits; this complex drives branch migration. In the full resolvosome a probable DNA-RuvA(4)-RuvB(12)-RuvC(2) complex forms which resolves the HJ.

It is found in the cytoplasm. The catalysed reaction is ATP + H2O = ADP + phosphate + H(+). Functionally, the RuvA-RuvB-RuvC complex processes Holliday junction (HJ) DNA during genetic recombination and DNA repair, while the RuvA-RuvB complex plays an important role in the rescue of blocked DNA replication forks via replication fork reversal (RFR). RuvA specifically binds to HJ cruciform DNA, conferring on it an open structure. The RuvB hexamer acts as an ATP-dependent pump, pulling dsDNA into and through the RuvAB complex. RuvB forms 2 homohexamers on either side of HJ DNA bound by 1 or 2 RuvA tetramers; 4 subunits per hexamer contact DNA at a time. Coordinated motions by a converter formed by DNA-disengaged RuvB subunits stimulates ATP hydrolysis and nucleotide exchange. Immobilization of the converter enables RuvB to convert the ATP-contained energy into a lever motion, pulling 2 nucleotides of DNA out of the RuvA tetramer per ATP hydrolyzed, thus driving DNA branch migration. The RuvB motors rotate together with the DNA substrate, which together with the progressing nucleotide cycle form the mechanistic basis for DNA recombination by continuous HJ branch migration. Branch migration allows RuvC to scan DNA until it finds its consensus sequence, where it cleaves and resolves cruciform DNA. This chain is Holliday junction branch migration complex subunit RuvB, found in Chlorobium phaeobacteroides (strain DSM 266 / SMG 266 / 2430).